The sequence spans 504 residues: Putative F-box/FBD/LRR-repeat protein At3g59240 (504 aa).

Residues K7 to S60 enclose the F-box domain. 7 LRR repeats span residues H69–C95, R145–S171, W173–D198, T286–C312, D329–G354, C369–E396, and D403–Y428. The region spanning S382–H427 is the FBD domain.

The polypeptide is Putative F-box/FBD/LRR-repeat protein At3g59240 (Arabidopsis thaliana (Mouse-ear cress)).